A 382-amino-acid polypeptide reads, in one-letter code: Alcohol dehydrogenase 4 (382 aa).

Positions 40, 72, 99, 100, 139, 140, 148, 150, 161, and 183 each coordinate NAD(+). Fe(2+) is bound by residues Asp-195, His-199, and His-264. His-268 and His-278 together coordinate NAD(+). Fe(2+) is bound at residue His-278.

It belongs to the iron-containing alcohol dehydrogenase family. In terms of assembly, homodimer. Zn(2+) serves as cofactor. It depends on Fe(2+) as a cofactor.

It is found in the mitochondrion. The enzyme catalyses a primary alcohol + NAD(+) = an aldehyde + NADH + H(+). It catalyses the reaction ethanol + NAD(+) = acetaldehyde + NADH + H(+). With respect to regulation, inhibited by EDTA. Alcohol dehydrogenase specific for ethanol. Acts mainyl as a mitochondrial formaldehyde dehydrogenase and has no effect on ethanol production. Shows drastically reduced activity towards primary alcohols from 4 carbon atoms upward. Isomers of aliphatic alcohol, as well as secondary alcohols and glycerol are not used at all. The role of ADH4 in yeast metabolism is not yet known, but ADH4 is not responsible for the production of ethanol during growth on glucose nor responsible for the oxidation of ethanol to acetaldehyde. The polypeptide is Alcohol dehydrogenase 4 (Saccharomyces cerevisiae (strain ATCC 204508 / S288c) (Baker's yeast)).